The sequence spans 739 residues: Nucleoprotein (739 aa).

The stretch at 334–363 (VNVGEQYQQLREAATEAEKQLQQYAESREL) forms a coiled coil. 2 disordered regions span residues 414–475 (RPNL…YHDD) and 498–642 (FELQ…IGQS). Positions 570–579 (TPIDQGDDDP) are enriched in acidic residues. Residues 614-624 (AEAHEPPHKSS) are compositionally biased toward basic and acidic residues. Residues 625 to 634 (NEPAETSQLN) show a composition bias toward polar residues.

The protein belongs to the filoviruses nucleoprotein family. As to quaternary structure, homooligomer. Homomultimerizes to form the nucleocapsid. Binds to viral genomic RNA. Interacts with VP35 and VP30 to form the nucleocapsid. Interacts with host PPP2R5C; this interaction leads to VP30 dephosphorylation and viral transcription. Interacts with VP24; this interaction facilitates nucleocapsid assembly and genome packaging. Interacts with matrix protein VP40; this interaction allows recruitment of the nucleocapsid into progeny virions. Interacts with host STAU1. Interacts with host NXF1 (via RNA-binding domain); this interaction recruits NXF1 to the inclusion bodies were viral replication takes place, probably to export viral mRNA-NXF1 complexes from these sites. Interacts with host CCDC92; this interaction sequesters NP in the host cytoplasm. Interacts with host TRIM14. In terms of processing, phosphorylated and O-glycosylated by host. Acetylated by host EP300 in vitro.

It localises to the virion. The protein localises to the host cytoplasm. In terms of biological role, oligomerizes into helical capsid to encapsidate the viral genome, protecting it from nucleases and the cellular innate immune response. VP35 binds to and stabilizes monomeric NP, keeping it soluble. Upon virus replication, NP is recruited to bind cooperatively viral genomic RNA and VP35 is released. The encapsidated genomic RNA is termed the nucleocapsid and serves as template for transcription and replication. The nucleocapsid is helical with a pitch of 10.81 NP per turn and a diameter of about 22nm. Each NP binds to six nucleotides of viral genomic RNA, three being exposed to the solvant and three hidden into the nucleocapsid. Also recruits host PPP2R5C phosphatase to dephosphorylate VP30 and thereby promote viral transcription. Upon virion assembly and budding, NP binds to VP24 and possibly host STAU1. This is Nucleoprotein (NP) from Homo sapiens (Human).